The primary structure comprises 538 residues: UPF0761 membrane protein PsycPRwf_0630 (538 aa).

6 helical membrane passes run L43 to L63, L100 to E120, W143 to V163, W183 to I203, I215 to M235, and A247 to L267. The interval S427–K538 is disordered. Positions P482 to K493 are enriched in low complexity. Over residues K503–K514 the composition is skewed to basic and acidic residues.

It belongs to the UPF0761 family.

Its subcellular location is the cell inner membrane. This is UPF0761 membrane protein PsycPRwf_0630 from Psychrobacter sp. (strain PRwf-1).